Reading from the N-terminus, the 400-residue chain is Nicotinate phosphoribosyltransferase (400 aa).

H220 bears the Phosphohistidine; by autocatalysis mark.

The protein belongs to the NAPRTase family. In terms of processing, transiently phosphorylated on a His residue during the reaction cycle. Phosphorylation strongly increases the affinity for substrates and increases the rate of nicotinate D-ribonucleotide production. Dephosphorylation regenerates the low-affinity form of the enzyme, leading to product release.

The catalysed reaction is nicotinate + 5-phospho-alpha-D-ribose 1-diphosphate + ATP + H2O = nicotinate beta-D-ribonucleotide + ADP + phosphate + diphosphate. The protein operates within cofactor biosynthesis; NAD(+) biosynthesis; nicotinate D-ribonucleotide from nicotinate: step 1/1. Functionally, catalyzes the synthesis of beta-nicotinate D-ribonucleotide from nicotinate and 5-phospho-D-ribose 1-phosphate at the expense of ATP. This chain is Nicotinate phosphoribosyltransferase, found in Shigella boydii serotype 18 (strain CDC 3083-94 / BS512).